The primary structure comprises 112 residues: Histone H2B (112 aa).

A disordered region spans residues 1–24 (MATPKSSSANRKKGGKKSHRKPKR). Over residues 10-24 (NRKKGGKKSHRKPKR) the composition is skewed to basic residues.

The protein belongs to the histone H2B family. In terms of assembly, the nucleosome is a histone octamer containing two molecules each of H2A, H2B, H3 and H4 assembled in one H3-H4 heterotetramer and two H2A-H2B heterodimers. The octamer wraps approximately 147 bp of DNA.

It localises to the nucleus. The protein localises to the chromosome. In terms of biological role, core component of nucleosome. Nucleosomes wrap and compact DNA into chromatin, limiting DNA accessibility to the cellular machineries which require DNA as a template. Histones thereby play a central role in transcription regulation, DNA repair, DNA replication and chromosomal stability. DNA accessibility is regulated via a complex set of post-translational modifications of histones, also called histone code, and nucleosome remodeling. The sequence is that of Histone H2B from Trypanosoma cruzi.